We begin with the raw amino-acid sequence, 632 residues long: 1-deoxy-D-xylulose-5-phosphate synthase (632 aa).

Thiamine diphosphate is bound by residues histidine 77 and 118–120 (GHA). Aspartate 149 is a binding site for Mg(2+). Residues 150-151 (GS), asparagine 178, phenylalanine 287, and glutamate 372 contribute to the thiamine diphosphate site. Mg(2+) is bound at residue asparagine 178.

Belongs to the transketolase family. DXPS subfamily. Homodimer. Mg(2+) is required as a cofactor. It depends on thiamine diphosphate as a cofactor.

The catalysed reaction is D-glyceraldehyde 3-phosphate + pyruvate + H(+) = 1-deoxy-D-xylulose 5-phosphate + CO2. The protein operates within metabolic intermediate biosynthesis; 1-deoxy-D-xylulose 5-phosphate biosynthesis; 1-deoxy-D-xylulose 5-phosphate from D-glyceraldehyde 3-phosphate and pyruvate: step 1/1. Functionally, catalyzes the acyloin condensation reaction between C atoms 2 and 3 of pyruvate and glyceraldehyde 3-phosphate to yield 1-deoxy-D-xylulose-5-phosphate (DXP). This chain is 1-deoxy-D-xylulose-5-phosphate synthase, found in Chlorobium luteolum (strain DSM 273 / BCRC 81028 / 2530) (Pelodictyon luteolum).